A 307-amino-acid polypeptide reads, in one-letter code: MSVTSTVEENHQKNPSTPAAVEEKKKRRWVFWDRRWRRLDYVKFSASFTVHSLALLAPFYFTWSALWVTFLFYTIGGLGITVSYHRNLAHRSFKVPKWLEYLLAYCALLAIQGDPIDWVSTHRYHHQFTDSERDPHSPKEGFWFSHLLWIYDSAYLVSKCGRRANVEDLKRQWFYRFLQKTVLFHILGLGFFLFYLGGMSFVTWGMGVGAALEVHVTCLINSLCHIWGTRTWKTNDTSRNVWWLSVFSFGESWHNNHHAFESSARQGLEWWQIDISWYIVRFFEIIGLATDVKVPTEAQRRRMAIVR.

Polar residues predominate over residues 1–17; sequence MSVTSTVEENHQKNPST. Positions 1-21 are disordered; sequence MSVTSTVEENHQKNPSTPAAV. A helical membrane pass occupies residues 53 to 73; it reads LALLAPFYFTWSALWVTFLFY. Fe cation-binding residues include His-85 and His-90. Residues 85 to 90 carry the Histidine box-1 motif; the sequence is HRNLAH. The helical transmembrane segment at 99 to 119 threads the bilayer; that stretch reads LEYLLAYCALLAIQGDPIDWV. The Fe cation site is built by His-122, His-125, and His-126. Positions 122–126 match the Histidine box-2 motif; that stretch reads HRYHH. 2 helical membrane passes run 182–202 and 204–224; these read VLFH…MSFV and WGMG…NSLC. Fe cation is bound by residues His-225, His-254, His-257, and His-258. The Histidine box-3 motif lies at 254–258; it reads HNNHH.

It belongs to the fatty acid desaturase type 1 family. Requires Fe cation as cofactor. Strongly expressed in flowers, roots, leaves, seedpods, and inflorescence meristems.

It is found in the endoplasmic reticulum membrane. The catalysed reaction is a 1-hexacosanoyl-2-acyl-phosphoglycerolipid + 2 Fe(II)-[cytochrome b5] + O2 + 2 H(+) = a 1-[(17Z)-hexacos-17-enoyl]-2-acyl-phosphoglycerolipid + 2 Fe(III)-[cytochrome b5] + 2 H2O. It catalyses the reaction a 1-tetracosanoyl-2-acyl-phosphoglycerolipid + 2 Fe(II)-[cytochrome b5] + O2 + 2 H(+) = a 1-[(15Z)-tetracos-15-enoyl]-2-acyl-phosphoglycerolipid + 2 Fe(III)-[cytochrome b5] + 2 H2O. Its pathway is lipid metabolism; polyunsaturated fatty acid biosynthesis. Functionally, involved in delta-9 desaturation of fatty acids. Plays a role in the production of very-long-chain monounsaturated fatty acids (VLCMUFAs) in seed lipids and in membrane phospholipids and sphingolipids. Acts as C-16:0 desaturase for monogalactosyl diacylglycerol (MGDG) and phosphatidylglycerol (PG). Is an essential component for cold adaptation. Is essential to adjust the acyl composition of organelle membrane lipid composition in response to cold stress. The chain is Delta-9 acyl-lipid desaturase 2 from Arabidopsis thaliana (Mouse-ear cress).